Here is a 591-residue protein sequence, read N- to C-terminus: L-fucose isomerase (591 aa).

Residues Glu-337 and Asp-361 each act as proton acceptor in the active site. Mn(2+) is bound by residues Glu-337, Asp-361, and His-528.

It belongs to the L-fucose isomerase family. As to quaternary structure, homohexamer. Mn(2+) serves as cofactor.

The protein resides in the cytoplasm. It catalyses the reaction L-fucose = L-fuculose. Its pathway is carbohydrate degradation; L-fucose degradation; L-lactaldehyde and glycerone phosphate from L-fucose: step 1/3. Its function is as follows. Converts the aldose L-fucose into the corresponding ketose L-fuculose. The protein is L-fucose isomerase of Shigella dysenteriae serotype 1 (strain Sd197).